The chain runs to 399 residues: MTFGKAAFLSFSLFGASWAGPSRTLQARAVCTPKAGGSSSIDDVPAIVKSISACGDGGTIVFPEDSTYYLNSVLDLAGCSGCELQVEGLLKFASDTDYWNGRTAMINVKNIDGLTIRSLTGSGVIDGNGQNAYDRFAEDSSYDRPTPLYITGGGDIKVSNFRLKNAPNVFVSVKGGTTNAVFSDMRLDATSKSENLPKNTDGFDIGESTYVTISGTTVSNNDDCVAFKPGCNYLTVTDITCTGSHGLSVGSLGKSSDDIVQNVRVEGATMISSTKAAGIKTYPSGGDHGLSTVTNVTWKDITIQNCDYAIQIQSCYGEDEEYCETNPGDAVFSGIAFEGFSGTTSSKYDPVTGNLNCGEDGKCDVSVVDYSVKAPSGGAAENLTVTTYKNRCLCQARSV.

An N-terminal signal peptide occupies residues 1–19 (MTFGKAAFLSFSLFGASWA). PbH1 repeat units lie at residues 177-207 (TTNA…DIGE), 208-229 (STYV…AFKP), 231-251 (CNYL…SVGS), 260-283 (VQNV…KTYP), and 293-314 (VTNV…QIQS). The active-site Proton donor is D222. The active site involves H245. Residues N295 and N382 are each glycosylated (N-linked (GlcNAc...) asparagine).

Belongs to the glycosyl hydrolase 28 family.

The protein localises to the secreted. In terms of biological role, pectinolytic enzyme involved in the degradation of xylogalacturonan (xga), a galacturonan backbone heavily substituted with xylose, and which is one important component of the hairy regions of pectin. Activity requires a galacturonic acid backbone substituted with xylose. This is Probable endo-xylogalacturonan hydrolase A (xghA) from Emericella nidulans (strain FGSC A4 / ATCC 38163 / CBS 112.46 / NRRL 194 / M139) (Aspergillus nidulans).